The sequence spans 186 residues: Catechol O-methyltransferase (186 aa).

S-adenosyl-L-methionine-binding positions include Val-7, Glu-29, Ser-37, Glu-55, Leu-56, 82-85, Ser-84, and Asp-106; that span reads GASQ. Residue Asp-106 participates in Mg(2+) binding. Lys-109 is a substrate binding site. Mg(2+) is bound by residues Asp-134 and Asn-135. Substrate is bound by residues Asn-135 and Glu-164. Ser-182 carries the post-translational modification Phosphoserine.

This sequence belongs to the class I-like SAM-binding methyltransferase superfamily. Cation-dependent O-methyltransferase family. The cofactor is Mg(2+).

The protein localises to the cytoplasm. The protein resides in the cell membrane. The catalysed reaction is a catechol + S-adenosyl-L-methionine = a guaiacol + S-adenosyl-L-homocysteine + H(+). It carries out the reaction 2-hydroxyestrone + S-adenosyl-L-methionine = 2-hydroxy-3-methoxy-estrone + S-adenosyl-L-homocysteine + H(+). The enzyme catalyses 4-hydroxyestrone + S-adenosyl-L-methionine = 4-methoxyestrone + S-adenosyl-L-homocysteine + H(+). It catalyses the reaction 2-hydroxyestrone + S-adenosyl-L-methionine = 2-methoxyestrone + S-adenosyl-L-homocysteine + H(+). The catalysed reaction is 4-hydroxy-17beta-estradiol + S-adenosyl-L-methionine = 4-methoxy-17beta-estradiol + S-adenosyl-L-homocysteine + H(+). It carries out the reaction 2-hydroxy-17beta-estradiol + S-adenosyl-L-methionine = 2-hydroxy-3-methoxy-17beta-estradiol + S-adenosyl-L-homocysteine + H(+). The enzyme catalyses 2-hydroxy-17beta-estradiol + S-adenosyl-L-methionine = 2-methoxy-17beta-estradiol + S-adenosyl-L-homocysteine + H(+). Its function is as follows. Catalyzes the O-methylation, and thereby the inactivation, of catecholamine neurotransmitters and catechol hormones. Also shortens the biological half-lives of certain neuroactive drugs, like L-DOPA, alpha-methyl DOPA and isoproterenol. This Sus scrofa (Pig) protein is Catechol O-methyltransferase (COMT).